We begin with the raw amino-acid sequence, 434 residues long: D-amino acid dehydrogenase (434 aa).

3–17 (VIILGGGVIGVTSAW) contributes to the FAD binding site.

Belongs to the DadA oxidoreductase family. FAD serves as cofactor.

The enzyme catalyses a D-alpha-amino acid + A + H2O = a 2-oxocarboxylate + AH2 + NH4(+). It participates in amino-acid degradation; D-alanine degradation; NH(3) and pyruvate from D-alanine: step 1/1. Its function is as follows. Oxidative deamination of D-amino acids. This Proteus mirabilis (strain HI4320) protein is D-amino acid dehydrogenase.